A 263-amino-acid chain; its full sequence is Probable adenylate kinase 7, mitochondrial (263 aa).

A mitochondrion-targeting transit peptide spans 1-30 (MAWLSRVRGVSPVTRLAAIRRSFGSAAALE). An ATP-binding site is contributed by 72–77 (GAWRHV). An NMP region spans residues 92–121 (SMGSLVRQELNPRSSLYKEIASAVNERKLV). AMP contacts are provided by residues Arg98, 119–121 (KLV), 149–152 (GIPR), Gln156, and Arg206. Gly234 lines the ATP pocket.

The protein belongs to the adenylate kinase family. As to quaternary structure, monomer.

The protein resides in the mitochondrion. The catalysed reaction is AMP + ATP = 2 ADP. In terms of biological role, catalyzes the reversible transfer of the terminal phosphate group between ATP and AMP. Plays an important role in cellular energy homeostasis and in adenine nucleotide metabolism. This is Probable adenylate kinase 7, mitochondrial from Arabidopsis thaliana (Mouse-ear cress).